The chain runs to 138 residues: ATP synthase epsilon chain (138 aa).

The protein belongs to the ATPase epsilon chain family. F-type ATPases have 2 components, CF(1) - the catalytic core - and CF(0) - the membrane proton channel. CF(1) has five subunits: alpha(3), beta(3), gamma(1), delta(1), epsilon(1). CF(0) has three main subunits: a, b and c.

It is found in the cellular thylakoid membrane. Functionally, produces ATP from ADP in the presence of a proton gradient across the membrane. The sequence is that of ATP synthase epsilon chain from Microcystis aeruginosa (strain NIES-843 / IAM M-2473).